Here is a 145-residue protein sequence, read N- to C-terminus: Deoxyuridine 5'-triphosphate nucleotidohydrolase (145 aa).

Substrate is bound by residues 64–66 (RSG), Asn-77, 81–83 (TID), and Met-91.

This sequence belongs to the dUTPase family. Mg(2+) serves as cofactor.

It carries out the reaction dUTP + H2O = dUMP + diphosphate + H(+). Its pathway is pyrimidine metabolism; dUMP biosynthesis; dUMP from dCTP (dUTP route): step 2/2. In terms of biological role, this enzyme is involved in nucleotide metabolism: it produces dUMP, the immediate precursor of thymidine nucleotides and it decreases the intracellular concentration of dUTP so that uracil cannot be incorporated into DNA. The polypeptide is Deoxyuridine 5'-triphosphate nucleotidohydrolase (Leptospira interrogans serogroup Icterohaemorrhagiae serovar copenhageni (strain Fiocruz L1-130)).